The following is a 566-amino-acid chain: Serine/threonine-protein kinase PknE (566 aa).

At 1 to 337 (MDGTAESREG…PLPRSARQPW (337 aa)) the chain is on the cytoplasmic side. Residue Ser7 is modified to Phosphoserine; by autocatalysis. Residue Thr11 is modified to Phosphothreonine; by autocatalysis. In terms of domain architecture, Protein kinase spans 16-275 (YRLRRLVGRG…DLSAAAHAAL (260 aa)). Residues 22 to 30 (VGRGGMGDV) and Lys45 contribute to the ATP site. 2 positions are modified to phosphothreonine; by autocatalysis: Thr50 and Thr59. The Proton acceptor role is filled by Asp139. Residues Thr170, Thr175, and Thr178 each carry the phosphothreonine; by autocatalysis modification. Residues 296-330 (PVPSTHPVSPGTRWPQPTPWAGGAPPWGPPSSPLP) are disordered. Residues 338–358 (LWVGVAVAVVVALAGGLGIAL) traverse the membrane as a helical segment. The Extracellular portion of the chain corresponds to 359 to 566 (AHPWRSSGPR…DPSWLARLIG (208 aa)).

It belongs to the protein kinase superfamily. Ser/Thr protein kinase family. In terms of assembly, homodimer. In terms of processing, autophosphorylated on serine and threonine residues. Dephosphorylated by PstP.

Its subcellular location is the cell membrane. The catalysed reaction is L-seryl-[protein] + ATP = O-phospho-L-seryl-[protein] + ADP + H(+). The enzyme catalyses L-threonyl-[protein] + ATP = O-phospho-L-threonyl-[protein] + ADP + H(+). Functionally, a serine/threonine-protein kinase, acts on HupB in vitro, modifying at least 2 Ser and 8 Thr residues. Important for bacterial survival in the host during infection. The polypeptide is Serine/threonine-protein kinase PknE (Mycobacterium tuberculosis (strain ATCC 25177 / H37Ra)).